The chain runs to 568 residues: Sulfite reductase [NADPH] hemoprotein beta-component (568 aa).

[4Fe-4S] cluster is bound by residues Cys425, Cys431, Cys470, and Cys474. A siroheme-binding site is contributed by Cys474.

This sequence belongs to the nitrite and sulfite reductase 4Fe-4S domain family. Alpha(8)-beta(8). The alpha component is a flavoprotein, the beta component is a hemoprotein. Siroheme is required as a cofactor. The cofactor is [4Fe-4S] cluster.

The catalysed reaction is hydrogen sulfide + 3 NADP(+) + 3 H2O = sulfite + 3 NADPH + 4 H(+). Its pathway is sulfur metabolism; hydrogen sulfide biosynthesis; hydrogen sulfide from sulfite (NADPH route): step 1/1. Its function is as follows. Component of the sulfite reductase complex that catalyzes the 6-electron reduction of sulfite to sulfide. This is one of several activities required for the biosynthesis of L-cysteine from sulfate. The protein is Sulfite reductase [NADPH] hemoprotein beta-component of Xanthomonas campestris pv. campestris (strain ATCC 33913 / DSM 3586 / NCPPB 528 / LMG 568 / P 25).